The primary structure comprises 207 residues: Small ribosomal subunit protein uS4c (207 aa).

The S4 RNA-binding domain occupies 92–153 (MRLDNILFRL…PKTYQSILSK (62 aa)).

It belongs to the universal ribosomal protein uS4 family. Part of the 30S ribosomal subunit. Contacts protein S5. The interaction surface between S4 and S5 is involved in control of translational fidelity.

It is found in the plastid. The protein resides in the chloroplast. Functionally, one of the primary rRNA binding proteins, it binds directly to 16S rRNA where it nucleates assembly of the body of the 30S subunit. With S5 and S12 plays an important role in translational accuracy. The chain is Small ribosomal subunit protein uS4c (rps4) from Equisetum hyemale (Dutch rush).